The primary structure comprises 198 residues: Ribonuclease HII (198 aa).

One can recognise an RNase H type-2 domain in the interval 10-198 (QLVAGVDEVG…PVKRALGLAS (189 aa)). Asp-16, Glu-17, and Asp-108 together coordinate a divalent metal cation.

This sequence belongs to the RNase HII family. Mn(2+) is required as a cofactor. It depends on Mg(2+) as a cofactor.

The protein resides in the cytoplasm. It catalyses the reaction Endonucleolytic cleavage to 5'-phosphomonoester.. Functionally, endonuclease that specifically degrades the RNA of RNA-DNA hybrids. The protein is Ribonuclease HII of Escherichia coli O81 (strain ED1a).